The sequence spans 384 residues: S-adenosylmethionine synthase (384 aa).

Position 16 (His16) interacts with ATP. Asp18 contributes to the Mg(2+) binding site. Glu44 provides a ligand contact to K(+). Positions 57 and 100 each coordinate L-methionine. Positions Gln100–Glu110 are flexible loop. ATP is bound by residues Asp165–Lys167, Asp240, Arg246–Lys247, Ala263, and Lys267. Asp240 provides a ligand contact to L-methionine. Lys271 contributes to the L-methionine binding site.

It belongs to the AdoMet synthase family. As to quaternary structure, homotetramer; dimer of dimers. It depends on Mg(2+) as a cofactor. Requires K(+) as cofactor.

It localises to the cytoplasm. The catalysed reaction is L-methionine + ATP + H2O = S-adenosyl-L-methionine + phosphate + diphosphate. It participates in amino-acid biosynthesis; S-adenosyl-L-methionine biosynthesis; S-adenosyl-L-methionine from L-methionine: step 1/1. Catalyzes the formation of S-adenosylmethionine (AdoMet) from methionine and ATP. The overall synthetic reaction is composed of two sequential steps, AdoMet formation and the subsequent tripolyphosphate hydrolysis which occurs prior to release of AdoMet from the enzyme. The polypeptide is S-adenosylmethionine synthase (Teredinibacter turnerae (strain ATCC 39867 / T7901)).